The primary structure comprises 218 residues: CTP-dependent diacylglycerol kinase 1 (218 aa).

Residues 1 to 19 (MSTKLTWSQWSKKHEIPRK) are Lumenal-facing. Residues 20–37 (ALHTSIGFFALLLQGCGY) traverse the membrane as a helical segment. His38 is a topological domain (cytoplasmic). A helical transmembrane segment spans residues 39–59 (AAQIIPVIEIGFIPAFTGDVI). The Lumenal portion of the chain corresponds to 60–88 (RFNWPAFSRLYNRVIGPLMRESEKNAWNG). A helical membrane pass occupies residues 89-109 (VIFYMIGVWIVLKVFPEEIAV). Residues 110–142 (MSVLLLSWCDTTASTVGRKWGKYTPKIAKNKSL) lie on the Cytoplasmic side of the membrane. A helical transmembrane segment spans residues 143–163 (AGSLGAFVCGVFCCYVYWGLF). The Lumenal portion of the chain corresponds to 164–179 (RTGPDSLAAQSRIPFP). 2 helical membrane-spanning segments follow: residues 180–200 (WLCL…VWGL) and 201–217 (DDNL…LYLI). Position 218 (Met218) is a topological domain, lumenal.

This sequence belongs to the DGK1 family. The cofactor is Ca(2+). Requires Mg(2+) as cofactor.

The protein localises to the endoplasmic reticulum membrane. It is found in the nucleus membrane. The catalysed reaction is a 1,2-diacyl-sn-glycerol + CTP = a 1,2-diacyl-sn-glycero-3-phosphate + CDP + H(+). Its function is as follows. CTP-dependent diacylglycerol kinase that catalyzes the phosphorylation of diacylglycerol (DAG) to phosphatidate (PA). Controls phosphatidate levels at the nuclear envelope. Counteracts the activity of PA phosphatase ned1. May be involved in vesicle trafficking between the endoplasmic reticulum and the Golgi apparatus. Involved in pre-tRNA splicing. This Schizosaccharomyces pombe (strain 972 / ATCC 24843) (Fission yeast) protein is CTP-dependent diacylglycerol kinase 1 (ptp4).